Here is a 312-residue protein sequence, read N- to C-terminus: Bark storage protein B (312 aa).

Positions 1 to 24 (MPQQSMQASLRDPIAEIERSNCKI) are cleaved as a signal peptide. An N-linked (GlcNAc...) asparagine glycan is attached at Asn-70.

It to wound-inducible poplar endochitinases. As to quaternary structure, monomer. Bark tissue.

In terms of biological role, may play a role in nitrogen storage. This Populus deltoides (Eastern poplar) protein is Bark storage protein B (BSP).